A 266-amino-acid polypeptide reads, in one-letter code: Apolipoprotein A-I (266 aa).

The signal sequence occupies residues 1 to 18 (MKAVVLTLAVLFLTGSQA). 2 repeat units span residues 67–88 (LKLL…EQIG) and 89–110 (PVTQ…QEMN). A 10 X approximate tandem repeats region spans residues 67 to 266 (LKLLDNWDSL…DEATKKLNSQ (200 aa)). Met-109 carries the methionine sulfoxide modification. One copy of the 3; half-length repeat lies at 111-121 (KDLEEVKKKVQ). 5 repeat units span residues 122 to 143 (PYLD…QKVA), 144 to 165 (PLGA…EKLS), 166 to 187 (PLGE…AQLA), 188 to 209 (PYGE…EGGG), and 210 to 231 (AALT…EKAK). The stretch at 232 to 242 (PALEDLRQGLL) is one 9; half-length repeat. Repeat 10 spans residues 243-266 (PVLENFRVSLLAAVDEATKKLNSQ).

Belongs to the apolipoprotein A1/A4/E family. In terms of assembly, homodimer. Interacts with APOA1BP and CLU. Component of a sperm activating protein complex (SPAP), consisting of APOA1, an immunoglobulin heavy chain, an immunoglobulin light chain and albumin. Interacts with NDRG1. Interacts with SCGB3A2. Interacts with NAXE and YJEFN3. Glycosylated. Post-translationally, palmitoylated. In terms of processing, phosphorylation sites are present in the extracellular medium.

It localises to the secreted. Participates in the reverse transport of cholesterol from tissues to the liver for excretion by promoting cholesterol efflux from tissues and by acting as a cofactor for the lecithin cholesterol acyltransferase (LCAT). As part of the SPAP complex, activates spermatozoa motility. The sequence is that of Apolipoprotein A-I (APOA1) from Leptonychotes weddellii (Weddell seal).